We begin with the raw amino-acid sequence, 161 residues long: Regulator of ribonuclease activity A (161 aa).

The protein belongs to the RraA family. In terms of assembly, homotrimer. Binds to both RNA-binding sites in the C-terminal region of Rne and to RhlB.

The protein localises to the cytoplasm. In terms of biological role, globally modulates RNA abundance by binding to RNase E (Rne) and regulating its endonucleolytic activity. Can modulate Rne action in a substrate-dependent manner by altering the composition of the degradosome. Modulates RNA-binding and helicase activities of the degradosome. The sequence is that of Regulator of ribonuclease activity A from Yersinia pseudotuberculosis serotype O:1b (strain IP 31758).